A 402-amino-acid polypeptide reads, in one-letter code: Serine/threonine transporter SstT (402 aa).

9 helical membrane passes run 19-39, 43-63, 86-106, 138-158, 179-199, 212-232, 287-307, 327-347, and 354-374; these read IGVVIGLFLGILVPKASAIGL, LFVGGLKAIAPLLVFTLVISA, TFAAALIAVVVNYIFPLTLIL, AITEANYMSILFWAVIFGLAM, VVKWIINLAPIGIMGLVFTSI, LLILVLVGTMLFVALVVNPII, IPLGAAINMAGAAITINILTL, VVAAVSACGASGVTGGSLLLI, and FGISNDVAMQVVGVGFIVGVI.

The protein belongs to the dicarboxylate/amino acid:cation symporter (DAACS) (TC 2.A.23) family.

It is found in the cell membrane. It catalyses the reaction L-serine(in) + Na(+)(in) = L-serine(out) + Na(+)(out). The catalysed reaction is L-threonine(in) + Na(+)(in) = L-threonine(out) + Na(+)(out). Its function is as follows. Involved in the import of serine and threonine into the cell, with the concomitant import of sodium (symport system). This is Serine/threonine transporter SstT from Streptococcus agalactiae serotype Ia (strain ATCC 27591 / A909 / CDC SS700).